The primary structure comprises 396 residues: Elongation factor Tu (396 aa).

In terms of domain architecture, tr-type G spans 10 to 206 (KPHVNVGTIG…TLDEYIPEPE (197 aa)). The G1 stretch occupies residues 19 to 26 (GHVDHGKT). 19–26 (GHVDHGKT) provides a ligand contact to GTP. T26 contacts Mg(2+). Positions 60–64 (GITIA) are G2. The G3 stretch occupies residues 81 to 84 (DCPG). Residues 81 to 85 (DCPGH) and 136 to 139 (NKAD) contribute to the GTP site. Residues 136–139 (NKAD) form a G4 region. Positions 174-176 (SAL) are G5.

This sequence belongs to the TRAFAC class translation factor GTPase superfamily. Classic translation factor GTPase family. EF-Tu/EF-1A subfamily. In terms of assembly, monomer.

The protein localises to the cytoplasm. It catalyses the reaction GTP + H2O = GDP + phosphate + H(+). Its function is as follows. GTP hydrolase that promotes the GTP-dependent binding of aminoacyl-tRNA to the A-site of ribosomes during protein biosynthesis. This Alcanivorax borkumensis (strain ATCC 700651 / DSM 11573 / NCIMB 13689 / SK2) protein is Elongation factor Tu.